The sequence spans 930 residues: Translation initiation factor IF-2 (930 aa).

The disordered stretch occupies residues 27–342 (LGLDVKSHSS…APKPVTERKF (316 aa)). Residues 52-103 (KAAAPQAPAEKPVAAQPSPQKTPAKEAAPVKAEPTEAKAAAQPEAKTETAAP) show a composition bias toward low complexity. 2 stretches are compositionally biased toward basic and acidic residues: residues 112–128 (FKAEREARAKEEAERRK) and 136–178 (QNKE…DGRR). A compositionally biased stretch (polar residues) spans 183–195 (HQGFNGQKRQQPQ). Positions 218–245 (RSSEERFKQAQEAKEVMERQNRRKEQPK) are enriched in basic and acidic residues. The segment covering 251-268 (PVQPAPAPSAPAANPSPA) has biased composition (pro residues). Over residues 280–297 (ARPDKKRDDFDREEEGPR) the composition is skewed to basic and acidic residues. The span at 302–318 (NRSSQNQVRNQRNSNWN) shows a compositional bias: low complexity. The tr-type G domain occupies 432-599 (ERPPVVTIMG…TVLLVAEIQE (168 aa)). A G1 region spans residues 441-448 (GHVDHGKT). 441-448 (GHVDHGKT) contacts GTP. The tract at residues 466–470 (GITQH) is G2. A G3 region spans residues 487-490 (DTPG). Residues 487-491 (DTPGH) and 541-544 (NKID) each bind GTP. The tract at residues 541–544 (NKID) is G4. The segment at 577–579 (SAK) is G5.

Belongs to the TRAFAC class translation factor GTPase superfamily. Classic translation factor GTPase family. IF-2 subfamily.

It is found in the cytoplasm. Functionally, one of the essential components for the initiation of protein synthesis. Protects formylmethionyl-tRNA from spontaneous hydrolysis and promotes its binding to the 30S ribosomal subunits. Also involved in the hydrolysis of GTP during the formation of the 70S ribosomal complex. This is Translation initiation factor IF-2 from Streptococcus sanguinis (strain SK36).